The primary structure comprises 345 residues: uncharacterized protein (345 aa).

This sequence belongs to the Gfo/Idh/MocA family. Biliverdin reductase subfamily.

This is an uncharacterized protein from Escherichia coli (strain K12).